Here is a 396-residue protein sequence, read N- to C-terminus: Seminal vesicle major clotting proteins (396 aa).

The first 21 residues, 1-21 (MKSTIFFILSLLLMLENQAAG), serve as a signal peptide directing secretion. The disordered stretch occupies residues 45–178 (MEEAVSGSGL…ASSVDHRKKG (134 aa)). Over residues 60–152 (RGSDREESVG…RVSVRHERVE (93 aa)) the composition is skewed to basic and acidic residues. SVP-3/-4 repeat repeat units follow at residues 65-88 (EESV…RSSV), 89-112 (EEPE…RHNV), and 113-136 (EEPE…RHSA). The SVP-3/-4 repeat; truncated repeat unit spans residues 137–157 (EEPEGERVSVRHERVEKTHKR). The propeptide occupies 177–192 (KGHIRFKRQDPIAALA). SVP-1 clotting repeat units lie at residues 194–217 (IEGQ…ERFS), 218–241 (VKGQ…ERFS), 242–265 (VTGQ…ERFS), 266–289 (MTGQ…ERFS), 290–313 (MTGQ…ERFS), 314–337 (VTGQ…ERFS), 338–361 (VTGQ…ERFS), and 362–385 (VSGQ…SGFS). Residues 194-396 (IEGQDAVKDS…KGQGSLKGLI (203 aa)) are 9 X tandem repeats of SVP-1 like motif. The segment at 377–396 (QESVQSGFSVKGQGSLKGLI) is disordered. The SVP-1 clotting 9; truncated repeat unit spans residues 386–396 (VKGQGSLKGLI).

It to the SVP-2 precursor, particularly in regions where protein processing must occur. Post-translationally, SVP-3 may be a post-translationally modified form of SVP-4. In terms of processing, covalent clotting of SVP-1 is catalyzed by a transglutaminase secreted by the anterior prostate through the formation of gamma-glutamyl-epsilon-lysine cross-links. The conserved 2 Lys and 1 Gln residues per functional unit seem to be the residues involved in the formation of those cross-links.

It is found in the secreted. In terms of biological role, SVP-1 serves as substrate in the formation of the copulatory plug. SVP-3 and SVP-4 may also contribute to the clot. The chain is Seminal vesicle major clotting proteins from Cavia porcellus (Guinea pig).